A 669-amino-acid chain; its full sequence is DNA ligase (669 aa).

NAD(+) is bound by residues 34–38 (DAEYD), 83–84 (SL), and Glu114. The active-site N6-AMP-lysine intermediate is Lys116. NAD(+)-binding residues include Arg137, Glu171, Lys287, and Lys311. Cys405, Cys408, Cys423, and Cys428 together coordinate Zn(2+). Residues 591 to 669 (NVESYFAGKT…EERFLQELNK (79 aa)) enclose the BRCT domain.

The protein belongs to the NAD-dependent DNA ligase family. LigA subfamily. Mg(2+) serves as cofactor. The cofactor is Mn(2+).

It catalyses the reaction NAD(+) + (deoxyribonucleotide)n-3'-hydroxyl + 5'-phospho-(deoxyribonucleotide)m = (deoxyribonucleotide)n+m + AMP + beta-nicotinamide D-nucleotide.. In terms of biological role, DNA ligase that catalyzes the formation of phosphodiester linkages between 5'-phosphoryl and 3'-hydroxyl groups in double-stranded DNA using NAD as a coenzyme and as the energy source for the reaction. It is essential for DNA replication and repair of damaged DNA. This is DNA ligase from Bacillus cereus (strain B4264).